The primary structure comprises 298 residues: Probable GTP 3',8-cyclase (298 aa).

Positions 4 to 230 (KFGREIRSLR…RKKYIVDGLE (227 aa)) constitute a Radical SAM core domain. R13 contacts GTP. Residues C20 and C24 each coordinate [4Fe-4S] cluster. Y26 lines the S-adenosyl-L-methionine pocket. C27 is a [4Fe-4S] cluster binding site. A GTP-binding site is contributed by K61. An S-adenosyl-L-methionine-binding site is contributed by G65. T91 is a GTP binding site. S115 provides a ligand contact to S-adenosyl-L-methionine. Residue K152 participates in GTP binding. 2 residues coordinate [4Fe-4S] cluster: C243 and C246. A GTP-binding site is contributed by 248 to 250 (RIR). C260 serves as a coordination point for [4Fe-4S] cluster.

This sequence belongs to the radical SAM superfamily. MoaA family. [4Fe-4S] cluster is required as a cofactor.

It catalyses the reaction GTP + AH2 + S-adenosyl-L-methionine = (8S)-3',8-cyclo-7,8-dihydroguanosine 5'-triphosphate + 5'-deoxyadenosine + L-methionine + A + H(+). The protein operates within cofactor biosynthesis; molybdopterin biosynthesis. Catalyzes the cyclization of GTP to (8S)-3',8-cyclo-7,8-dihydroguanosine 5'-triphosphate. The sequence is that of Probable GTP 3',8-cyclase from Methanocaldococcus jannaschii (strain ATCC 43067 / DSM 2661 / JAL-1 / JCM 10045 / NBRC 100440) (Methanococcus jannaschii).